The following is a 785-amino-acid chain: MSRVLWTLWVLGAVTNLSKEEAPDQSSSLSCDPTGVCDGRSRSLNSMPSGLTAAVRSLDLSNNEITYIGNSDLRDCVNLKALRLESNGINTIEEESFLSLWSLEHLDLSYNLLSNLSSSWFRPLSSLKFLNLLGNPYKSLGETPLFSQLTNLRILKVGNIYSFTEIQDKDFAGLTFLEELEIDASNLQRYEPKSLKSIQNISYLALRMKQPVLLVEIFVDLSSSLKHLELRDTHLDTFHFSEASINETHTLVKKWTFRNVKVTDRSFTGVVRLLNYVSGVLEVEFEDCTLYGLGDFDIPDVDKIKNIGQIETLTVRRLHIPHFYSFYDMSSIYSLTEDVKRITVENSKVFLVPCLLSQHLKSLEYLDLSENLMVEEYLKNSACEDAWPSLQTLVLRQNHLASLERTGETLLTLKNLTNIDISKNSFHSMPETCQWPEKMKYLNLSSTRIHSVTGCIPKTLEILDVSNNNLNLFSLNLPQLKELYISRNKLMTLPDASLLPMLLVLKISRNAITTFSKEQLDSFHTLKTLEAGGNNFICSCEFLSFTQEQQALAKVLIDWPANYLCDSPSHVRGQQVQDVRLSVSECHRTALVSGMCCALFLLILLTEVLCHRFHGLWYMRMMWAWLQAKRKPRKAPSRDVCYDAFVSYSEHDSYWVENLLVQKLEHFNPPFKLCLHKRDFIPGKWIIDNIIDSIEKSRKTIFVLSENFVKSEWCKYELDFSHFRLFDENSDAAILILLEPIEKKAIPQRFCKLRKIMNTKTYLEWPTDDAQQEGFWLNLRTAIKS.

Positions 1 to 17 are cleaved as a signal peptide; it reads MSRVLWTLWVLGAVTNL. The Extracellular portion of the chain corresponds to 18-589; that stretch reads SKEEAPDQSS…RLSVSECHRT (572 aa). An intrachain disulfide couples Cys-31 to Cys-37. 19 LRR repeats span residues 54–77, 78–101, 102–125, 126–150, 151–175, 176–199, 200–223, 224–250, 251–278, 279–308, 309–337, 338–361, 362–388, 389–414, 415–437, 438–457, 458–478, 479–500, and 501–524; these read AVRS…RDCV, NLKA…LSLW, SLEH…RPLS, SLKF…SQLT, NLRI…AGLT, FLEE…KSIQ, NISY…DLSS, SLKH…ETHT, LVKK…NYVS, GVLE…KNIG, QIET…SLTE, DVKR…QHLK, SLEY…DAWP, SLQT…LTLK, NLTN…QWPE, KMKY…GCIP, KTLE…LNLP, QLKE…SLLP, and MLLV…DSFH. Residue Asn-115 is glycosylated (N-linked (GlcNAc...) asparagine). Asn-200 and Asn-246 each carry an N-linked (GlcNAc...) asparagine glycan. Cys-354 and Cys-383 are joined by a disulfide. 2 N-linked (GlcNAc...) asparagine glycosylation sites follow: Asn-415 and Asn-443. Cysteines 433 and 455 form a disulfide. An LRRCT domain is found at 525–579; that stretch reads TLKTLEAGGNNFICSCEFLSFTQEQQALAKVLIDWPANYLCDSPSHVRGQQVQDV. The helical transmembrane segment at 590 to 610 threads the bilayer; it reads ALVSGMCCALFLLILLTEVLC. The Cytoplasmic portion of the chain corresponds to 611–785; it reads HRFHGLWYMR…WLNLRTAIKS (175 aa). The region spanning 640–783 is the TIR domain; it reads VCYDAFVSYS…GFWLNLRTAI (144 aa). Lys-755 is covalently cross-linked (Glycyl lysine isopeptide (Lys-Gly) (interchain with G-Cter in ubiquitin)). The ATG16L1-binding motif signature appears at 762 to 779; sequence YLEWPTDDAQQEGFWLNL.

This sequence belongs to the Toll-like receptor family. Interacts with LY96, TLR1 and TLR6 (via extracellular domain). TLR2 seems to exist in heterodimers with either TLR1 or TLR6 before stimulation by the ligand. The heterodimers form bigger oligomers in response to their corresponding ligands as well as further heterotypic associations with other receptors such as CD14 and/or CD36. Binds MYD88 (via TIR domain). Interacts with TICAM1. Interacts with CNPY3. Interacts with ATG16L1. Interacts with PPP1R11. Interacts with TICAM2. Interacts with TIRAP. Post-translationally, ubiquitinated at Lys-755 by PPP1R11, leading to its degradation. Deubiquitinated by USP2. In terms of processing, glycosylation of Asn-443 is critical for secretion of the N-terminal ectodomain of TLR2.

Its subcellular location is the membrane. It is found in the cytoplasmic vesicle. It localises to the phagosome membrane. The protein resides in the membrane raft. Cooperates with LY96 to mediate the innate immune response to bacterial lipoproteins and other microbial cell wall components. Cooperates with TLR1 or TLR6 to mediate the innate immune response to bacterial lipoproteins or lipopeptides. Acts via MYD88 and TRAF6, leading to NF-kappa-B activation, cytokine secretion and the inflammatory response. May also promote apoptosis in response to lipoproteins. Forms activation clusters composed of several receptors depending on the ligand, these clusters trigger signaling from the cell surface and subsequently are targeted to the Golgi in a lipid-raft dependent pathway. Forms the cluster TLR2:TLR6:CD14:CD36 in response to diacylated lipopeptides and TLR2:TLR1:CD14 in response to triacylated lipopeptides. The chain is Toll-like receptor 2 (TLR2) from Canis lupus familiaris (Dog).